A 758-amino-acid chain; its full sequence is 5-methyltetrahydropteroyltriglutamate--homocysteine methyltransferase (758 aa).

Residues 16-19 (RELK) and Lys112 each bind 5-methyltetrahydropteroyltri-L-glutamate. L-homocysteine-binding positions include 433-435 (IGS) and Glu486. L-methionine is bound by residues 433 to 435 (IGS) and Glu486. Residues 517–518 (RC) and Trp563 contribute to the 5-methyltetrahydropteroyltri-L-glutamate site. Asp601 contacts L-homocysteine. Asp601 serves as a coordination point for L-methionine. Glu607 is a 5-methyltetrahydropteroyltri-L-glutamate binding site. Residues His643, Cys645, and Glu667 each contribute to the Zn(2+) site. His696 (proton donor) is an active-site residue. A Zn(2+)-binding site is contributed by Cys728.

It belongs to the vitamin-B12 independent methionine synthase family. Zn(2+) serves as cofactor.

It carries out the reaction 5-methyltetrahydropteroyltri-L-glutamate + L-homocysteine = tetrahydropteroyltri-L-glutamate + L-methionine. Its pathway is amino-acid biosynthesis; L-methionine biosynthesis via de novo pathway; L-methionine from L-homocysteine (MetE route): step 1/1. Its function is as follows. Catalyzes the transfer of a methyl group from 5-methyltetrahydrofolate to homocysteine resulting in methionine formation. The protein is 5-methyltetrahydropteroyltriglutamate--homocysteine methyltransferase of Neisseria meningitidis serogroup A / serotype 4A (strain DSM 15465 / Z2491).